Here is a 148-residue protein sequence, read N- to C-terminus: Large-conductance mechanosensitive channel (148 aa).

2 consecutive transmembrane segments (helical) span residues 12–32 (AFAM…GGAF) and 85–105 (GQFL…FLFI).

This sequence belongs to the MscL family. As to quaternary structure, homopentamer.

Its subcellular location is the cell inner membrane. Its function is as follows. Channel that opens in response to stretch forces in the membrane lipid bilayer. May participate in the regulation of osmotic pressure changes within the cell. The sequence is that of Large-conductance mechanosensitive channel from Bacteroides thetaiotaomicron (strain ATCC 29148 / DSM 2079 / JCM 5827 / CCUG 10774 / NCTC 10582 / VPI-5482 / E50).